The sequence spans 65 residues: Large ribosomal subunit protein bL35 (65 aa).

Residues 1 to 51 (MPKIKTNRGAAKRFRKSASGRVKRGNAFTSHILTHKTRKNKRNLRGTSMVS) are disordered. 2 stretches are compositionally biased toward basic residues: residues 10-24 (AAKR…RVKR) and 33-44 (LTHKTRKNKRNL).

Belongs to the bacterial ribosomal protein bL35 family.

In Pelobacter propionicus (strain DSM 2379 / NBRC 103807 / OttBd1), this protein is Large ribosomal subunit protein bL35.